We begin with the raw amino-acid sequence, 28 residues long: Arylalkyl acylamidase (28 aa).

Homotetramer.

The catalysed reaction is an N-acetylarylalkylamine + H2O = an aralkylamine + acetate. Its activity is regulated as follows. Activated by divalent metal ions. Inhibited by certain thiol reagents. Functionally, shows a strict specificity for N-acetyl arylalkylamines but not acetanilide derivatives. This chain is Arylalkyl acylamidase, found in Pseudomonas putida (Arthrobacter siderocapsulatus).